We begin with the raw amino-acid sequence, 448 residues long: Asparagine--tRNA ligase (448 aa).

This sequence belongs to the class-II aminoacyl-tRNA synthetase family. Homodimer.

The protein resides in the cytoplasm. The enzyme catalyses tRNA(Asn) + L-asparagine + ATP = L-asparaginyl-tRNA(Asn) + AMP + diphosphate + H(+). This Streptococcus mutans serotype c (strain ATCC 700610 / UA159) protein is Asparagine--tRNA ligase.